A 960-amino-acid chain; its full sequence is Importin alpha re-exporter (960 aa).

HEAT repeat units follow at residues 1 to 33 (MSDLETVAKFLAESVIASTAKTSERNLRQLETQ), 34 to 73 (DGFGLTLLHVIASTNLPLSTRLAGALFFKNFIKRKWVDEN), 74 to 120 (GNHL…FPDR), 121 to 157 (WPTLLSDLASRLSNDDMVTNKGVLTVAHSIFKRWRPL), 158 to 220 (FRSD…NCQD), 221 to 278 (IPEF…TRYE), 279 to 323 (DVFG…TRIP), 324 to 392 (KYFE…KEKN), 393 to 445 (EVLV…GVSS), 446 to 489 (TNNL…RNQL), 490 to 528 (TKAQLIELMPILATFLQTDEYVVYTYAAITIEKILTIRE), 529 to 586 (SNTS…TSED), 587 to 630 (SIQP…LNYT), 631 to 674 (QRQN…QSAT), 675 to 716 (IPES…SSIF), 717 to 751 (PDLVPVLGIFQRLIASKAYEVHGFDLLEHIMLLID), 752 to 794 (MNRL…NKLG), and 795 to 826 (SDFLIHFIDEVQDGLFQQIWGNFIITTLPTIG). Residues 23-96 (SERNLRQLET…KKEIVPLMIS (74 aa)) form the Importin N-terminal domain. A Nuclear localization signal motif is present at residues 366 to 381 (RRDLEGSDTDTRRRAC). The HEAT 19; with insert repeat unit spans residues 827–928 (NLLDRKIALI…RLYVAEALNK (102 aa)). Residues 929–960 (YNAISGNTFLNTILPQLTQENQVKLNQLLVGN) form an HEAT 20 repeat.

It belongs to the XPO2/CSE1 family. Binds with high affinity to SRP1 only in the presence of RanGTP. The complex is dissociated by the RanGTP-binding protein YRB1.

The protein localises to the cytoplasm. It localises to the nucleus. Export receptor for importin alpha (SRP1). Mediates importin-alpha re-export from the nucleus to the cytoplasm after import substrates have been released into the nucleoplasm. This Saccharomyces cerevisiae (strain ATCC 204508 / S288c) (Baker's yeast) protein is Importin alpha re-exporter (CSE1).